The primary structure comprises 200 residues: MWPGVIEQTANGRESYDLPSRLLKDRIVLVQGEVEDSMATSIVAQLLFLEAQDPTKEISMYINSPGGSVTAGLSITDTMNFIKAPVTTIVMGLAASMGTIIASSGEKGHRFMLPNAEYLIHQPMGGAVGGTQQTDMAIIAEQLTKTRDKLNKILADASDRDLETIARDTERDHWMSAEETLAYGFIDGILTKSGEKPTTK.

The active-site Nucleophile is the S96. The active site involves H121.

It belongs to the peptidase S14 family. As to quaternary structure, fourteen ClpP subunits assemble into 2 heptameric rings which stack back to back to give a disk-like structure with a central cavity, resembling the structure of eukaryotic proteasomes.

It is found in the cytoplasm. It catalyses the reaction Hydrolysis of proteins to small peptides in the presence of ATP and magnesium. alpha-casein is the usual test substrate. In the absence of ATP, only oligopeptides shorter than five residues are hydrolyzed (such as succinyl-Leu-Tyr-|-NHMec, and Leu-Tyr-Leu-|-Tyr-Trp, in which cleavage of the -Tyr-|-Leu- and -Tyr-|-Trp bonds also occurs).. Cleaves peptides in various proteins in a process that requires ATP hydrolysis. Has a chymotrypsin-like activity. Plays a major role in the degradation of misfolded proteins. The chain is ATP-dependent Clp protease proteolytic subunit from Leuconostoc citreum (strain KM20).